Consider the following 359-residue polypeptide: 4-galactosyl-N-acetylglucosaminide 3-alpha-L-fucosyltransferase FUT6 (359 aa).

Residues 1-14 (MDPLGPAKPQWSCR) lie on the Cytoplasmic side of the membrane. A helical; Signal-anchor for type II membrane protein transmembrane segment spans residues 15–34 (CCLTTLLFQLLVAVCFFSYL). Residues 35–359 (RVSRDDPTVY…QTRSITAWFT (325 aa)) are Lumenal-facing. N-linked (GlcNAc...) asparagine glycans are attached at residues Asn46, Asn91, Asn153, and Asn184. The determines site-specific fucosylation stretch occupies residues 73-112 (KPTALPRCSEMLPGTADCNITADRKVYPQADAVIVHHREV).

It belongs to the glycosyltransferase 10 family. As to quaternary structure, homodimer and monomer. Monomer (secreted form). N-glycosylated. In terms of processing, proteolytic cleavage releases a secreted glycoform of 43 kDa.

It is found in the golgi apparatus. Its subcellular location is the golgi stack membrane. The protein resides in the secreted. The catalysed reaction is a beta-D-galactosyl-(1-&gt;4)-N-acetyl-beta-D-glucosaminyl derivative + GDP-beta-L-fucose = a beta-D-galactosyl-(1-&gt;4)-[alpha-L-fucosyl-(1-&gt;3)]-N-acetyl-beta-D-glucosaminyl derivative + GDP + H(+). It catalyses the reaction an N-acetyl-alpha-neuraminyl-(2-&gt;3)-beta-D-galactosyl-(1-&gt;4)-N-acetyl-beta-D-glucosaminyl derivative + GDP-beta-L-fucose = an alpha-Neu5Ac-(2-&gt;3)-beta-D-Gal-(1-&gt;4)-[alpha-L-Fuc-(1-&gt;3)]-beta-D-GlcNAc derivative + GDP + H(+). The enzyme catalyses an alpha-Neu5Ac-(2-&gt;3)-beta-D-Gal-(1-&gt;4)-beta-D-GlcNAc-(1-&gt;3)-beta-D-Gal-(1-&gt;4)-[alpha-L-Fuc-(1-&gt;3)]-beta-D-GlcNAc derivative + GDP-beta-L-fucose = an alpha-Neu5Ac-(2-&gt;3)-beta-D-Gal-(1-&gt;4)-[alpha-L-Fuc-(1-&gt;3)]-beta-D-GlcNAc-(1-&gt;3)-beta-D-Gal-(1-&gt;4)-[alpha-L-Fuc-(1-&gt;3)]-beta-D-GlcNAc derivative + GDP + H(+). It carries out the reaction a neolactoside nLc6Cer + GDP-beta-L-fucose = beta-D-Gal-(1-&gt;4)-[alpha-L-Fuc-(1-&gt;3)]-beta-D-GlcNAc-(1-&gt;3)-beta-D-Gal-(1-&gt;4)-beta-D-GlcNAc-(1-&gt;3)-beta-D-Gal-(1-&gt;4)-beta-D-Glc-(1&lt;-&gt;1')-Cer + GDP + H(+). The catalysed reaction is a neolactoside nLc6Cer + GDP-beta-L-fucose = beta-D-galactosyl-(1-&gt;4)-N-acetyl-beta-D-glucosaminyl-(1-&gt;3)-beta-D-galactosyl-(1-&gt;4)-[alpha-L-fucosyl-(1-&gt;3)]-N-acetyl-beta-D-glucosaminyl-(1-&gt;3)-beta-D-galactosyl-(1-&gt;4)-beta-D-glucosyl-(1&lt;-&gt;1')-ceramide + GDP + H(+). It catalyses the reaction a neolactoside VI(3)-alpha-NeuNAc-nLc6Cer + GDP-beta-L-fucose = a neolactoside VI(3)-alpha-NeuAc,V(3)-alphaFuc-nLc6Cer + GDP + H(+). The enzyme catalyses beta-D-galactosyl-(1-&gt;4)-N-acetyl-D-glucosamine + GDP-beta-L-fucose = beta-D-galactosyl-(1-&gt;4)-[alpha-L-fucosyl-(1-&gt;3)]-N-acetyl-D-glucosamine + GDP + H(+). It carries out the reaction N-acetyl-alpha-neuraminosyl-(2-&gt;3)-beta-D-galactosyl-(1-&gt;4)-N-acetyl-beta-D-glucosamine + GDP-beta-L-fucose = N-acetyl-alpha-neuraminosyl-(2-&gt;3)-beta-D-galactosyl-(1-&gt;4)-[alpha-L-fucosyl-(1-&gt;3)]-N-acetyl-beta-D-glucosamine + GDP + H(+). The catalysed reaction is lactose + GDP-beta-L-fucose = beta-D-galactosyl-(1-&gt;4)-[alpha-L-fucosyl-(1-&gt;3)]-D-glucose + GDP + H(+). It catalyses the reaction alpha-L-Fuc-(1-&gt;2)-beta-D-Gal-(1-&gt;4)-D-Glc + GDP-beta-L-fucose = alpha-L-Fuc-(1-&gt;2)-beta-D-Gal-(1-&gt;4)-[alpha-L-Fuc-(1-&gt;3)]-D-Glc + GDP + H(+). The enzyme catalyses a beta-D-galactosyl-(1-&gt;4)-N-acetyl-beta-D-6-sulfooxy-glucosaminyl derivative + GDP-beta-L-fucose = a beta-D-galactosyl-(1-&gt;4)-[alpha-L-fucosyl-(1-&gt;3)]-N-acetyl-beta-D-6-sulfooxy-glucosaminyl derivative + GDP + H(+). The protein operates within protein modification; protein glycosylation. Catalyzes the transfer of L-fucose, from a guanosine diphosphate-beta-L-fucose, to the N-acetyl glucosamine (GlcNAc) of a distal alpha2,3 sialylated lactosamine unit of a glycoprotein- or glycolipid-linked sialopolylactosamines chain or of a distal or internal lactosamine unit of a neutral glycoprotein- or glycolipid-linked polylactosamines chain through an alpha-1,3 glycosidic linkage and participates in surface expression of the sialyl Lewis X (sLe(x)), Lewis X (Le(x)) and non sialylated VIM2 determinants. Moreover transfers fucose to H-type 2 (Fucalpha1-2Galbeta1-4GlcNAc) chain acceptor substrates and participates in difucosylated sialyl Lewis x determinants. Also fucosylates a polylactosamine substrate having a 6 sulfate modification at the GlcNAc moiety and gives rise to sialyl and non-sialyl 6-sulfo lewis X. Does not have activity towards type 1 ((Galbeta1-3GlcNAc)) and H-type 1 chain (Fucalpha1-2Galbeta1-3GlcNAc) acceptors substrates. The polypeptide is 4-galactosyl-N-acetylglucosaminide 3-alpha-L-fucosyltransferase FUT6 (Gorilla gorilla gorilla (Western lowland gorilla)).